The chain runs to 278 residues: Methyltransferase adrK (278 aa).

S-adenosyl-L-methionine-binding positions include 124–125 (DL), 151–152 (DV), and 152–153 (VL).

Belongs to the class I-like SAM-binding methyltransferase superfamily. In terms of assembly, homodimer.

The protein operates within secondary metabolite biosynthesis; terpenoid biosynthesis. Methyltransferase; part of the gene cluster that mediates the biosynthesis of andrastins, meroterpenoid compounds that exhibit inhibitory activity against ras farnesyltransferase, suggesting that they could be promising leads for antitumor agents. The first step of the pathway is the synthesis of 3,5-dimethylorsellinic acid (DMOA) by the polyketide synthase adrD via condensation of one acetyl-CoA starter unit with 3 malonyl-CoA units and 2 methylations. DMAO is then converted to farnesyl-DMAO by the prenyltransferase adrG. The methyltransferase adrK catalyzes the methylation of the carboxyl group of farnesyl-DMAO to farnesyl-DMAO methyl ester which is further converted to epoxyfarnesyl-DMAO methyl ester by the FAD-dependent monooxygenase adrH. The terpene cyclase adrI then catalyzes the carbon skeletal rearrangement to generate the andrastin E, the first compound in the pathway having the andrastin scaffold, with the tetracyclic ring system. The post-cyclization tailoring enzymes adrF, adrE, adrJ, and adrA, are involved in the conversion of andrastin E into andrastin A. The short chain dehydrogenase adrF is responsible for the oxidation of the C-3 a hydroxyl group of andrastin E to yield the corresponding ketone, andrastin D. The ketoreductase adrE stereoselectively reduces the carbonyl moiety to reverse the stereochemistry of the C-3 position to yield andrastin F. The acetyltransferase adrJ is the acetyltransferase that attaches the acetyl group to the C-3 hydroxyl group of andrastin F to yield andrastin C. Finally, the cytochrome P450 monooxygenase adrA catalyzes two sequential oxidation reactions of the C-23 methyl group, to generate the corresponding alcohol andrastin B, and aldehyde andrastin A. The sequence is that of Methyltransferase adrK from Penicillium roqueforti.